The following is a 47-amino-acid chain: Protein YpaB (47 aa).

This is Protein YpaB (ypaB) from Escherichia coli (strain K12).